The chain runs to 256 residues: Small ribosomal subunit protein uS2 (256 aa).

The protein belongs to the universal ribosomal protein uS2 family.

This is Small ribosomal subunit protein uS2 from Acidiphilium cryptum (strain JF-5).